Reading from the N-terminus, the 165-residue chain is Nucleotide-binding protein P9211_04811 (165 aa).

The protein belongs to the YajQ family.

In terms of biological role, nucleotide-binding protein. The protein is Nucleotide-binding protein P9211_04811 of Prochlorococcus marinus (strain MIT 9211).